The chain runs to 584 residues: Endogenous retrovirus group FC1 Env polyprotein (584 aa).

An N-terminal signal peptide occupies residues 1–22; sequence MARPSPLCLLLLLTLLPPIVPS. Topologically, residues 23-514 are extracellular; it reads NSLLTEPPFR…NYGGGWWQSP (492 aa). N-linked (GlcNAc...) asparagine glycosylation is found at Asn-69 and Asn-247. The short motif at 251 to 254 is the CXXC element; that stretch reads CFLC. Residues Asn-272, Asn-276, Asn-308, Asn-313, Asn-322, Asn-334, Asn-342, and Asn-346 are each glycosylated (N-linked (GlcNAc...) asparagine). The tract at residues 388–413 is fusion peptide; the sequence is PLVIGVSLTSSLVASGLGTGAIVHFI. Residues 449–465 carry the CKS-17 motif; it reads MQNRRALDLLTADKGGT. The cysteines at positions 466 and 473 are disulfide-linked. A CX6CC motif is present at residues 466 to 474; sequence CMFLGEECC. Residue Asn-478 is glycosylated (N-linked (GlcNAc...) asparagine). The helical transmembrane segment at 515 to 540 threads the bilayer; the sequence is LTTWIIPFISPILIICLLLLIAPCVL. The Cytoplasmic portion of the chain corresponds to 541–584; the sequence is KFIKNRISEVSRVTVNQMLLHPYSRLPTSEDHYDVALTQQEAAR.

The protein belongs to the gamma type-C retroviral envelope protein family. HERV class-I F(c)1 env subfamily. In terms of assembly, the surface (SU) and transmembrane (TM) proteins form a heterodimer. SU and TM are attached by noncovalent interactions or by a labile interchain disulfide bond. Specific enzymatic cleavages in vivo yield the mature SU and TM proteins. Post-translationally, the CXXC motif is highly conserved across a broad range of retroviral envelope proteins. It is thought to participate in the formation of a labile disulfide bond possibly with the CX6CC motif present in the transmembrane protein.

It localises to the virion. The protein localises to the cell membrane. Retroviral envelope proteins mediate receptor recognition and membrane fusion during early infection. Endogenous envelope proteins may have kept, lost or modified their original function during evolution. This endogenous envelope protein has lost its original fusogenic properties. Functionally, SU mediates receptor recognition. Its function is as follows. TM anchors the envelope heterodimer to the viral membrane through one transmembrane domain. The other hydrophobic domain, called fusion peptide, mediates fusion of the viral membrane with the target cell membrane. This chain is Endogenous retrovirus group FC1 Env polyprotein (ERVFC1), found in Pan troglodytes (Chimpanzee).